A 131-amino-acid chain; its full sequence is Large ribosomal subunit protein bL17 (131 aa).

This sequence belongs to the bacterial ribosomal protein bL17 family. Part of the 50S ribosomal subunit. Contacts protein L32.

This is Large ribosomal subunit protein bL17 from Thermotoga neapolitana (strain ATCC 49049 / DSM 4359 / NBRC 107923 / NS-E).